Reading from the N-terminus, the 117-residue chain is Immunoglobulin kappa variable 1D-43 (117 aa).

A signal peptide spans 1–22 (MDMRVPAQRLGLLLLWFPGARC). Positions 23-45 (AIRMTQSPFSLSASVGDRVTITC) are framework-1. The Ig-like domain occupies 23 to 117 (AIRMTQSPFS…YYCQQYYSTP (95 aa)). C45 and C110 are joined by a disulfide. A complementarity-determining-1 region spans residues 46 to 56 (WASQGISSYLA). The tract at residues 57 to 71 (WYQQKPAKAPKLFIY) is framework-2. The segment at 72-78 (YASSLQS) is complementarity-determining-2. Residues 79–110 (GVPSRFSGSGSGTDYTLTISSLQPEDFATYYC) are framework-3. The tract at residues 111-117 (QQYYSTP) is complementarity-determining-3.

Immunoglobulins are composed of two identical heavy chains and two identical light chains; disulfide-linked.

The protein localises to the secreted. The protein resides in the cell membrane. Functionally, v region of the variable domain of immunoglobulin light chains that participates in the antigen recognition. Immunoglobulins, also known as antibodies, are membrane-bound or secreted glycoproteins produced by B lymphocytes. In the recognition phase of humoral immunity, the membrane-bound immunoglobulins serve as receptors which, upon binding of a specific antigen, trigger the clonal expansion and differentiation of B lymphocytes into immunoglobulins-secreting plasma cells. Secreted immunoglobulins mediate the effector phase of humoral immunity, which results in the elimination of bound antigens. The antigen binding site is formed by the variable domain of one heavy chain, together with that of its associated light chain. Thus, each immunoglobulin has two antigen binding sites with remarkable affinity for a particular antigen. The variable domains are assembled by a process called V-(D)-J rearrangement and can then be subjected to somatic hypermutations which, after exposure to antigen and selection, allow affinity maturation for a particular antigen. The chain is Immunoglobulin kappa variable 1D-43 from Homo sapiens (Human).